The primary structure comprises 348 residues: Calcium homeostasis modulator protein 1 (348 aa).

Topologically, residues 1 to 20 are cytoplasmic; the sequence is MDKFRMIFQFLQSNQESFMN. The interval 9-36 is central pore; it reads QFLQSNQESFMNGICGIMALASAQMYSA. Residues 21 to 36 traverse the membrane as a helical segment; it reads GICGIMALASAQMYSA. Over 37-48 the chain is Extracellular; sequence FDFNCPCLPGYN. 2 disulfide bridges follow: C41/C126 and C43/C160. Residues 49-71 form a helical membrane-spanning segment; it reads VVYSLGILLTPPLVLFLLGLVMN. The segment at 62-69 is phospholipid-binding; the sequence is VLFLLGLV. The Cytoplasmic segment spans residues 72-98; the sequence is NNISMLAEEWKRPAGRRAKDPAVLRYM. The helical transmembrane segment at 99–124 threads the bilayer; sequence FCSMAQRALIAPVVWVAVTLLDGKCF. The S-palmitoyl cysteine moiety is linked to residue C100. Positions 104-116 are phospholipid-binding; it reads QRALIAPVVWVAV. Residues 125–179 lie on the Extracellular side of the membrane; that stretch reads LCAFCTAVPVATLGNGSLVPGLPAPELARLLARVPCPEIYDGNWLLAREVAVRYL. A glycan (N-linked (GlcNAc...) asparagine) is linked at N139. Residues 180–205 form a helical membrane-spanning segment; that stretch reads RCISQALGWSFVLLTTLLAFVVRSVR. Residues 191-201 form a phospholipid-binding region; that stretch reads VLLTTLLAFVV. The Cytoplasmic portion of the chain corresponds to 206 to 348; that stretch reads PCFTQVAFLK…KEVATYFSKV (143 aa). Residue C207 is the site of S-palmitoyl cysteine attachment. Residues 324–348 are disordered; the sequence is LMSNGWAGGEPRPPRKEVATYFSKV.

This sequence belongs to the CALHM family. Oligomerizes to form hexamers and octamers. Does not form gap junctions. Associates with CALHM3 as a pore-forming subunit in a hetero-hexameric channel complex. N-glycosylated. Assembly with CALHM3 is associated with N-glycan remodeling and formation of hybrid complex- and high mannose-type glycochains. This N-glycan processing regulates channel trafficking and gating kinetics. In terms of processing, palmitoylated by ZDHHC3, ZDHHC20 and possibly ZDHHC7. Palmitoylation regulates voltage-dependent gating of the channel by shifting it toward more depolarized potentials. In terms of tissue distribution, specifically expressed in type II taste bud cells (at protein level). Not expressed in brain.

Its subcellular location is the cell membrane. It is found in the endoplasmic reticulum membrane. The protein resides in the basolateral cell membrane. It catalyses the reaction ATP(in) = ATP(out). The catalysed reaction is Ca(2+)(in) = Ca(2+)(out). It carries out the reaction Mg(2+)(in) = Mg(2+)(out). The enzyme catalyses Na(+)(in) = Na(+)(out). It catalyses the reaction K(+)(in) = K(+)(out). The catalysed reaction is Li(+)(in) = Li(+)(out). It carries out the reaction Rb(+)(in) = Rb(+)(out). The enzyme catalyses Cs(+)(in) = Cs(+)(out). It catalyses the reaction chloride(in) = chloride(out). With respect to regulation, regulated by membrane voltage and extracellular Ca(2+). Inhibited by Gd(3+), ruthenium red, and Zn(2+) and partially inhibited by 2-aminoethoxydiphenyl borate. Its function is as follows. Pore-forming subunit of gustatory voltage-gated ion channels required for sensory perception of sweet, bitter and umami tastes. With CALHM3 forms a fast-activating voltage-gated ATP-release channel in type II taste bud cells, ATP acting as a neurotransmitter to activate afferent neural gustatory pathways. Acts both as a voltage-gated and calcium-activated ion channel: mediates neuronal excitability in response to membrane depolarization and low extracellular Ca(2+) concentration. Has poor ion selectivity and forms a wide pore (around 14 Angstroms) that mediates permeation of small ions including Ca(2+), Na(+), K(+) and Cl(-), as well as larger ions such as ATP(4-). Mediates Ca(2+) influx and downstream activation of the ERK1 and ERK2 cascade in neurons. Triggers endoplasmic reticulum stress by reducing the calcium content of the endoplasmic reticulum. May indirectly control amyloid precursor protein (APP) proteolysis and aggregated amyloid-beta (Abeta) peptides levels in a Ca(2+) dependent manner. The sequence is that of Calcium homeostasis modulator protein 1 from Mus musculus (Mouse).